The sequence spans 215 residues: Beta-crystallin A3 (215 aa).

M1 is subject to N-acetylmethionine. Residues 1 to 24 (METQTVQQELESLPTTKMAQTNPM) are disordered. An N-terminal arm region spans residues 1-30 (METQTVQQELESLPTTKMAQTNPMPGSVGP). N-acetylalanine is present on E2. Beta/gamma crystallin 'Greek key' domains are found at residues 31–70 (WKIT…KVEC) and 71–117 (GAWV…RPIC). Residues C82 and C117 each carry the S-glutathionyl cysteine; alternate modification. 2 positions are modified to S-methylcysteine; alternate: C82 and C117. A connecting peptide region spans residues 118–123 (SANHKE). Beta/gamma crystallin 'Greek key' domains follow at residues 124–165 (SKIT…KIQC) and 166–214 (GAWV…RRIQ).

Belongs to the beta/gamma-crystallin family. As to quaternary structure, homo/heterodimer, or complexes of higher-order. The structure of beta-crystallin oligomers seems to be stabilized through interactions between the N-terminal arms. Interacts with CRYBA1. Post-translationally, specific cleavages in the N-terminal arm occur during lens maturation and give rise to several truncated forms. Isoform A1 contains a N-acetylalanine at position 2.

In terms of biological role, crystallins are the dominant structural components of the vertebrate eye lens. This chain is Beta-crystallin A3, found in Bos taurus (Bovine).